Consider the following 138-residue polypeptide: Ribosome-binding factor A (138 aa).

A disordered region spans residues 119–138 (RSPEVQRDLGPSNEKDDEQN).

Belongs to the RbfA family. Monomer. Binds 30S ribosomal subunits, but not 50S ribosomal subunits or 70S ribosomes.

It localises to the cytoplasm. Its function is as follows. One of several proteins that assist in the late maturation steps of the functional core of the 30S ribosomal subunit. Associates with free 30S ribosomal subunits (but not with 30S subunits that are part of 70S ribosomes or polysomes). Required for efficient processing of 16S rRNA. May interact with the 5'-terminal helix region of 16S rRNA. The protein is Ribosome-binding factor A of Agrobacterium fabrum (strain C58 / ATCC 33970) (Agrobacterium tumefaciens (strain C58)).